We begin with the raw amino-acid sequence, 337 residues long: Mating-type protein MAT-2 (337 aa).

The HMG box DNA-binding region spans 125–193 (APRPMNCWII…EHLRQHPNYK (69 aa)). The segment at 171 to 219 (KRPWQDAAQSAKEEHLRQHPNYKYTPRKPGEKKKRQSRKSKRAAATTTA) is disordered. The span at 200–212 (GEKKKRQSRKSKR) shows a compositional bias: basic residues.

Its subcellular location is the nucleus. The protein is Mating-type protein MAT-2 (MAT2) of Cochliobolus sativus (Common root rot and spot blotch fungus).